A 138-amino-acid chain; its full sequence is DNA-directed RNA polymerase subunit omega (138 aa).

Positions 117-138 (NLLGRDNFFSTPENRNTSNTDS) are disordered. The segment covering 124 to 138 (FFSTPENRNTSNTDS) has biased composition (polar residues).

Belongs to the RNA polymerase subunit omega family. As to quaternary structure, the RNAP catalytic core consists of 2 alpha, 1 beta, 1 beta' and 1 omega subunit. When a sigma factor is associated with the core the holoenzyme is formed, which can initiate transcription.

The enzyme catalyses RNA(n) + a ribonucleoside 5'-triphosphate = RNA(n+1) + diphosphate. In terms of biological role, promotes RNA polymerase assembly. Latches the N- and C-terminal regions of the beta' subunit thereby facilitating its interaction with the beta and alpha subunits. This chain is DNA-directed RNA polymerase subunit omega, found in Ehrlichia canis (strain Jake).